We begin with the raw amino-acid sequence, 227 residues long: Ras-related protein Rab-3C (227 aa).

GTP-binding residues include Ser39, Gly42, Lys43, Thr44, Ser45, Thr56, Ser57, Ser61, and Thr62. A Mg(2+)-binding site is contributed by Thr44. The short motif at 53 to 66 is the Switch 1 element; it reads DSFTSAFVSTVGID. Residues Thr62 and Asp85 each coordinate Mg(2+). Residue Thr86 is modified to Phosphothreonine; by LRRK2. Residues 86–104 carry the Switch 2 motif; sequence TAGQERYRTITTAYYRGAM. Residues Gly88, Asn143, Lys144, Asp146, Ala174, and Lys175 each contribute to the GTP site. 2 positions are modified to phosphoserine: Ser196 and Ser198. The segment at 202 to 227 is disordered; sequence DPAITAAKQSTRLKETPPPPQPNCGC. At Thr206 the chain carries Phosphothreonine. Residues 217–227 are compositionally biased toward pro residues; sequence TPPPPQPNCGC. 2 S-geranylgeranyl cysteine lipidation sites follow: Cys225 and Cys227. At Cys227 the chain carries Cysteine methyl ester.

The protein belongs to the small GTPase superfamily. Rab family. Interacts with RIMS1, RIMS2, RPH3A and RPH3AL. Interacts with GDI2, CHM and CHML; phosphorylation at Thr-86 disrupts these interactions. Interacts with MADD (via uDENN domain); the GTP-bound form is preferred for interaction. It depends on Mg(2+) as a cofactor. Post-translationally, phosphorylation of Thr-86 in the switch II region by LRRK2 prevents the association of RAB regulatory proteins, including CHM, CHML and RAB GDP dissociation inhibitor GDI2.

It is found in the cell membrane. The enzyme catalyses GTP + H2O = GDP + phosphate + H(+). With respect to regulation, regulated by guanine nucleotide exchange factors (GEFs) which promote the exchange of bound GDP for free GTP. Regulated by GTPase activating proteins (GAPs) which increase the GTP hydrolysis activity. Inhibited by GDP dissociation inhibitors (GDIs) which prevent Rab-GDP dissociation. Functionally, the small GTPases Rab are key regulators of intracellular membrane trafficking, from the formation of transport vesicles to their fusion with membranes. Rabs cycle between an inactive GDP-bound form and an active GTP-bound form that is able to recruit to membranes different sets of downstream effectors directly responsible for vesicle formation, movement, tethering and fusion. The chain is Ras-related protein Rab-3C from Mus musculus (Mouse).